The sequence spans 880 residues: MSQPAGGRRKPRTLGPPVCSIRPFKSSEQYLEAMKEDLAEWLRDLYGLDIDAANFLQVLETGLVLCQHANVVTDAALAFLAEAPAQAQKIPMPRVGVSCNGAAQPGTFQARDNVSNFIQWCRKEMGIQEVLMFETEDLVLRKNVKNVVLCLLELGRRAWRFGVAAPTLVQLEEEIEEEVRRELALPPPDPSPPAPPRRQPCHFRNLDQMVQSLVSHCTCPVQFSMVKVSEGKYRVGDSNTLIFIRILRNHVMVRVGGGWDTLGHYLDKHDPCRCTSLSHKPGSFLKPPAPPVQHEVRVQDGPSQTQPTMTISRSQSPPPPVDWKTYTSSDRRLRPPTPSSPRPRRERGAGTGASREMAPFLRCQERSLIPSWRQPTAGDSPPSPQSSSTQKGRDPQCTSSGKREERYPPELPRGRIPTSWVHEETDSWGTDAGNPTPQRLRAIEATTKGISARGPSPLPRSFGPAECLGLRLPLRDEAKGAFFQFREPESVRSPTPVQGLTKIPIRLPPARPPTPGRSFPGATSGSPRTELGRDPIPLRAVTVDLAGSTHGDCSVEVRQEDQQLDIQVMAEARESWDLGLQEQEGRYTPLPLGGNKEQAIYCSLEEEILGNMKLLEVRSACPQGTRSGVIPRSGVYIPRLAGQWPEPGGPYDKAIQELAQGSPSLLKVDLEAWKAAPTGSPKPAVTPGPGSLKGKLGARQSGPRTKASLSAKGTHMRKVPPQGGQDCSASTVSASPEAPTPSPLDPNSDKAKACLSKGRRTLRKPKRVPSIYKLKLRPRIRPRRDHRPEKQPSRIPRPLAYVFLGPARQPPKDRLLRAVLGSKGGEASRVDGASVGEEEEEGKEEKEPAAPLESSPQPPEGLQPHWLNQAPLPPEEESWV.

Residues glutamate 32–tryptophan 159 form the Calponin-homology (CH) domain. The segment at arginine 180–proline 200 is disordered. Residues leucine 185–arginine 198 are compositionally biased toward pro residues. Residues cysteine 201–arginine 273 enclose the GAR domain. 4 disordered regions span residues serine 283–phenylalanine 360, tryptophan 372–proline 437, glutamate 489–arginine 533, and alanine 676–valine 880. Over residues glycine 301 to glutamine 315 the composition is skewed to polar residues. Residues glutamine 438–valine 880 form an interaction with ADORA2A region. Residues arginine 506–proline 515 show a composition bias toward pro residues. The segment covering glutamine 725–alanine 734 has biased composition (polar residues). 2 stretches are compositionally biased toward basic residues: residues lysine 757 to arginine 767 and leucine 774 to aspartate 785.

It belongs to the GAS2 family. As to quaternary structure, interacts with ADORA2A (via its cytoplasmic C-terminal domain). Interacts with GNAS, GNAL, GNAQ, and GNA13. Interacts with MAPRE1. Expressed in bronchial and nasal epithelial cells (at protein level). Expressed in brain, kidney, lung, testis, fallopian tubes, and skeletal muscle. Expressed at low levels in stomach and colon.

The protein resides in the cytoplasm. Its subcellular location is the cytoskeleton. It localises to the cell membrane. It is found in the stress fiber. The protein localises to the cilium basal body. Functionally, involved in the cross-linking of microtubules and microfilaments. Regulates microtubule dynamics and stability by interacting with microtubule plus-end tracking proteins, such as MAPRE1, to regulate microtubule growth along actin stress fibers. Enhances ADORA2-mediated adenylyl cyclase activation by acting as a scaffold to recruit trimeric G-protein complexes to ADORA2A. Regulates ciliary orientation and performance in cells located in the airway. The sequence is that of GAS2-like protein 2 (GAS2L2) from Homo sapiens (Human).